The primary structure comprises 173 residues: Photosystem I assembly protein Ycf3 (173 aa).

TPR repeat units follow at residues 35 to 68 (AFVY…EENP), 72 to 105 (SYIL…NPKM), and 120 to 153 (GEKA…APNN).

It belongs to the Ycf3 family.

The protein resides in the cellular thylakoid membrane. Essential for the assembly of the photosystem I (PSI) complex. May act as a chaperone-like factor to guide the assembly of the PSI subunits. The polypeptide is Photosystem I assembly protein Ycf3 (Synechocystis sp. (strain ATCC 27184 / PCC 6803 / Kazusa)).